A 307-amino-acid chain; its full sequence is UPF0276 protein Bphyt_5128 (307 aa).

It belongs to the UPF0276 family.

In Paraburkholderia phytofirmans (strain DSM 17436 / LMG 22146 / PsJN) (Burkholderia phytofirmans), this protein is UPF0276 protein Bphyt_5128.